We begin with the raw amino-acid sequence, 294 residues long: 33 kDa chaperonin (294 aa).

Cystine bridges form between Cys238-Cys240 and Cys271-Cys274.

The protein belongs to the HSP33 family. In terms of processing, under oxidizing conditions two disulfide bonds are formed involving the reactive cysteines. Under reducing conditions zinc is bound to the reactive cysteines and the protein is inactive.

The protein localises to the cytoplasm. Functionally, redox regulated molecular chaperone. Protects both thermally unfolding and oxidatively damaged proteins from irreversible aggregation. Plays an important role in the bacterial defense system toward oxidative stress. The polypeptide is 33 kDa chaperonin (Clostridium tetani (strain Massachusetts / E88)).